A 373-amino-acid chain; its full sequence is Putative C-P lyase subunit protein HtxH (373 aa).

This sequence belongs to the PhnI family.

Its function is as follows. Belongs to an operon involved in hypophosphite oxidation. Exact function not known. This Stutzerimonas stutzeri (Pseudomonas stutzeri) protein is Putative C-P lyase subunit protein HtxH (htxH).